The chain runs to 49 residues: Defensin Tk-AMP-D2 (49 aa).

4 disulfide bridges follow: C3-C49, C14-C34, C20-C43, and C24-C45.

In terms of biological role, plant defense peptide. The polypeptide is Defensin Tk-AMP-D2 (Triticum kiharae (Wheat)).